Here is a 278-residue protein sequence, read N- to C-terminus: RsbT co-antagonist protein RsbRD (278 aa).

The STAS domain maps to 160 to 271 (SAPIMPITDG…QSLAKALANK (112 aa)). Thr-181 is modified (phosphothreonine).

Probably present in the stressosome with RsbRA, RsbRB, RsbRC and RsbS. In terms of processing, phosphorylated by RsbT.

One of 4 functionally non-identical RsbR paralogs, it functions in the environmental signaling branch of the general stress response. Functionally, negative regulator of sigma-B activity. Non-phosphorylated RsbS binds to RsbT, preventing its association with RsbU. Requires any one of RsbRA, RsbRB, RsbRC or RsbRD to sequester RsbT. When RsbS and the RsbR paralog(s) are phosphorylated, they release RsbT, which can then bind and activate RsbU. The polypeptide is RsbT co-antagonist protein RsbRD (rsbRD) (Bacillus subtilis (strain 168)).